A 374-amino-acid polypeptide reads, in one-letter code: 4-hydroxybenzoate polyprenyltransferase, mitochondrial (374 aa).

Residues 1-34 (MLRWGGAGLARGLRAVRSAWLRGPRGLPLALVRS) constitute a mitochondrion transit peptide. The Mitochondrial matrix segment spans residues 35–83 (AGVPGARDRRAPAPGTQRGRALSLSAAAVVNSAPRPLQPYLRLMRLDKP). Residues 84–104 (IGTWLLYLPCTWSIGLAADPG) traverse the membrane as a helical segment. Residues 105–108 (CFPD) are Mitochondrial intermembrane-facing. Residues 109–129 (WYMLSLFGTGAILMRGAGCTI) traverse the membrane as a helical segment. The Mitochondrial matrix portion of the chain corresponds to 130 to 148 (NDMWDRDFDKKVTRTANRP). A helical membrane pass occupies residues 149 to 169 (IAAGDISTFQSFVFLGGQLTL). The Mitochondrial intermembrane segment spans residues 170-172 (ALG). A helical membrane pass occupies residues 173–193 (VLLCLNYYSIAMGAASLLLVV). Over 194–200 (TYPLVKR) the chain is Mitochondrial matrix. Residues 201 to 221 (ITFWPQLALGLTFNWGALLGW) traverse the membrane as a helical segment. The Mitochondrial intermembrane portion of the chain corresponds to 222–230 (SAVKGSCDP). Residues 231 to 251 (AVCLPLYFSGVMWTLIYDTIY) form a helical membrane-spanning segment. The Mitochondrial matrix portion of the chain corresponds to 252–277 (AHQDKKDDALIGLKSTALLFQENTRQ). The chain crosses the membrane as a helical span at residues 278–298 (WLSGFGVAMVAALSLAGANNG). Residues 299-332 (QTVPYYAAVAAVGAHLAHQIYTVDIHRAEDCWDK) are Mitochondrial intermembrane-facing. A helical membrane pass occupies residues 333-353 (FTSNRTVGMLLFLGIVLGNLC). The Mitochondrial matrix segment spans residues 354-374 (KEKTEEAKDAEAVRVGSEQTS).

Belongs to the UbiA prenyltransferase family. Mg(2+) serves as cofactor.

It localises to the mitochondrion inner membrane. The enzyme catalyses an all-trans-polyprenyl diphosphate + 4-hydroxybenzoate = a 4-hydroxy-3-(all-trans-polyprenyl)benzoate + diphosphate. It carries out the reaction all-trans-decaprenyl diphosphate + 4-hydroxybenzoate = 4-hydroxy-3-(all-trans-decaprenyl)benzoate + diphosphate. The catalysed reaction is all-trans-nonaprenyl diphosphate + 4-hydroxybenzoate = 4-hydroxy-3-(all-trans-nonaprenyl)benzoate + diphosphate. It participates in cofactor biosynthesis; ubiquinone biosynthesis. Functionally, mediates the second step in the final reaction sequence of coenzyme Q (CoQ) biosynthesis. Catalyzes the prenylation of para-hydroxybenzoate (PHB) with an all-trans polyprenyl donor (such as all-trans-nonaprenyl diphosphate). The length of the polyprenyl side chain varies depending on the species, in humans, the side chain is comprised of 10 isoprenyls producing CoQ10 (also known as ubiquinone), whereas rodents predominantly generate CoQ9. However, this specificity is not complete, human tissues have low amounts of CoQ9 and rodent organs contain some CoQ10. Plays a central role in the biosynthesis of CoQ9. CoQ9 is a vital molecule that transports electrons from mitochondrial respiratory chain complexes. CoQs also function as cofactors for uncoupling protein and play a role as regulators of the extracellularly-induced ceramide-dependent apoptotic pathway. Regulates mitochondrial permeability transition pore (mPTP) opening and ROS production (pivotal events in cell death) in a tissue specific manner. The polypeptide is 4-hydroxybenzoate polyprenyltransferase, mitochondrial (Mus musculus (Mouse)).